We begin with the raw amino-acid sequence, 249 residues long: Protection of telomeres protein poz1 (249 aa).

In terms of assembly, interacts with pot1, rap1 and tpz1.

The protein resides in the cytoplasm. It localises to the nucleus. The protein localises to the chromosome. It is found in the telomere. Telomeric DNA-binding protein that negatively regulates telomerase and telomere length. The chain is Protection of telomeres protein poz1 (poz1) from Schizosaccharomyces pombe (strain 972 / ATCC 24843) (Fission yeast).